A 196-amino-acid polypeptide reads, in one-letter code: dCTP deaminase (196 aa).

Residues 113–118 (RSSLAR), Asp131, 139–141 (VLE), Tyr174, Lys181, and Gln185 contribute to the dCTP site. Glu141 acts as the Proton donor/acceptor in catalysis.

The protein belongs to the dCTP deaminase family. As to quaternary structure, homotrimer.

It carries out the reaction dCTP + H2O + H(+) = dUTP + NH4(+). It functions in the pathway pyrimidine metabolism; dUMP biosynthesis; dUMP from dCTP (dUTP route): step 1/2. In terms of biological role, catalyzes the deamination of dCTP to dUTP. This is dCTP deaminase from Wigglesworthia glossinidia brevipalpis.